The following is a 944-amino-acid chain: Protein unc-45 homolog A (944 aa).

The tract at residues 1 to 25 is disordered; it reads MTVSGPGTPEPRPSDPGASSAEELR. TPR repeat units follow at residues 21–54, 58–91, and 92–125; these read AEEL…GATP, AILH…DGGD, and VKAL…EPKN. Residue lysine 70 is modified to N6-acetyllysine. Position 483 is an N6-acetyllysine (lysine 483).

Interacts with PGR isoforms A and B as well as with NR3C1 in the absence of ligand, and with HSP90AB1. Binding to HSP90AB1 involves 2 UNC45A monomers per HSP90AB1 dimer.

Its subcellular location is the cytoplasm. It localises to the perinuclear region. The protein localises to the nucleus. May act as co-chaperone for HSP90 (Potential). Prevents the stimulation of HSP90AB1 ATPase activity by AHSA1. Positive factor in promoting PGR function in the cell. May be necessary for proper folding of myosin (Potential). Necessary for normal cell proliferation. Necessary for normal myotube formation and myosin accumulation during muscle cell development. May play a role in erythropoiesis in stroma cells in the spleen. The chain is Protein unc-45 homolog A (Unc45a) from Rattus norvegicus (Rat).